We begin with the raw amino-acid sequence, 188 residues long: MIVIMDNGGQYVHRIWRTLRYIGVESKIIPNTTPLEDIKAMNPSGIIFSGGPSLENTGNCEKILENYDEFNVPILGICLGHQLIAKFFGGKVGRGEKAEYSLVEIEILEEDEIFKGLPRKLRVWESHMDEVKELPPNFKVLARSETCPIEAMKHEELPIYGVQFHPEVAHTEHGEDILRNFAKLCGEL.

Positions Met-1–Leu-188 constitute a Glutamine amidotransferase type-1 domain. The active-site Nucleophile is the Cys-78. Active-site residues include His-165 and Glu-167.

Heterodimer composed of a glutamine amidotransferase subunit (A) and a GMP-binding subunit (B).

It catalyses the reaction XMP + L-glutamine + ATP + H2O = GMP + L-glutamate + AMP + diphosphate + 2 H(+). It functions in the pathway purine metabolism; GMP biosynthesis; GMP from XMP (L-Gln route): step 1/1. In terms of biological role, catalyzes the synthesis of GMP from XMP. The protein is GMP synthase [glutamine-hydrolyzing] subunit A of Pyrococcus abyssi (strain GE5 / Orsay).